A 715-amino-acid polypeptide reads, in one-letter code: MAVQVAKKTPLRRVRNIGIMAHIDAGKTTTTERILLYTGLTHKLGEVHDGNAVMDWMAQERERGITITSAATTVFWGGIEGSAKNGKKDSQEGRHSRIPEQYRINIIDTPGHVDFTVEVERSLRVLDGAIALFDSVAGVEPQSETVWRQADKYRVPRIAFVNKMDRIGADFYHAVETMRQRLGANPVPVQLPIGAEADFVGIVDLVEMKAIIYKDDLGAEWDETEIPEELRERAEEYRERLIEAAAEHDEEVMVAYLEGEEIEPDRIRAALRKATLELQITPVFVGSAFKNKGIQPLLDGVIDYLPSPLDVPPVRGKTLDGEEASREPDEEAPLAALAFKVQADPHVGKLTYIRVYSGTLKAGSYVMNTTKGVRERVGRLLQMHANTREQRDEVYAGELVAAVGLSNTSTGDTLVAVDDPHPIVLEQMVFPEPVIDQAIEPKTKADQEKLSQALQRLAEEDPTFRVRTDEETGQTVIAGMGELHLEIILDRLTREFKVDANIGKPQVAYRETIRRRVEGVEGRFVRQTGGRGQYGHAIINMEPHEGGYEFEDRIVGGVIPRDYIPAVDKGIREALESGVLAGYPVVDVKVELVDGSYHEVDSSEMAFQIAGSMAAKEALKRARPVLLEPIMAVEVTVPEEFMGDVMGDLSSRRGQIQGMDSRGNSQVIRAMVPLAEMFGYATSLRSRTQGRATFTMQFDHYAEVPQNIAEKIAER.

A tr-type G domain is found at 12–309; that stretch reads RRVRNIGIMA…GVIDYLPSPL (298 aa). GTP-binding positions include 21–28, 108–112, and 162–165; these read AHIDAGKT, DTPGH, and NKMD.

This sequence belongs to the TRAFAC class translation factor GTPase superfamily. Classic translation factor GTPase family. EF-G/EF-2 subfamily.

It is found in the cytoplasm. Functionally, catalyzes the GTP-dependent ribosomal translocation step during translation elongation. During this step, the ribosome changes from the pre-translocational (PRE) to the post-translocational (POST) state as the newly formed A-site-bound peptidyl-tRNA and P-site-bound deacylated tRNA move to the P and E sites, respectively. Catalyzes the coordinated movement of the two tRNA molecules, the mRNA and conformational changes in the ribosome. The polypeptide is Elongation factor G (Rubrobacter xylanophilus (strain DSM 9941 / JCM 11954 / NBRC 16129 / PRD-1)).